Reading from the N-terminus, the 424-residue chain is Serine/threonine-protein kinase H1 (424 aa).

The N-myristoyl glycine moiety is linked to residue Gly-2. Cys-3 carries S-palmitoyl cysteine lipidation. The interval Ala-59 to Arg-79 is disordered. The Protein kinase domain maps to Tyr-98 to Val-355. Residues Ile-104–Val-112 and Lys-127 each bind ATP. Catalysis depends on Asp-218, which acts as the Proton acceptor. The tract at residues Arg-378 to Glu-408 is disordered. A phosphoserine; by autocatalysis mark is found at Ser-380 and Ser-381. Residues Ser-381–Thr-398 show a composition bias toward low complexity.

Belongs to the protein kinase superfamily. CAMK Ser/Thr protein kinase family. Homodimer. In terms of processing, autophosphorylated on serine residues. Myristoylated. Required for membrane association. Prerequisite for palmitoylation to occur. Post-translationally, palmitoylated.

It localises to the golgi apparatus. Its subcellular location is the cytoplasm. It is found in the cytoskeleton. The protein localises to the microtubule organizing center. The protein resides in the centrosome. It localises to the nucleus speckle. Its subcellular location is the endoplasmic reticulum membrane. It is found in the cell membrane. The enzyme catalyses L-seryl-[protein] + ATP = O-phospho-L-seryl-[protein] + ADP + H(+). The catalysed reaction is L-threonyl-[protein] + ATP = O-phospho-L-threonyl-[protein] + ADP + H(+). Activity depends on Ca(2+) concentration. Functionally, serine/threonine protein kinase that may be involved in the regulation of pre-mRNA processing. It may phosphorylate components of nuclear splice factor compartments (SFC), such as non-snRNP splicing factors containing a serine/arginine-rich domain (SR proteins). Reversible phosphorylation of SR proteins may cause their release into the nucleoplasm and change their local concentration, thereby influencing alternative splicing. This is Serine/threonine-protein kinase H1 (Pskh1) from Mus musculus (Mouse).